We begin with the raw amino-acid sequence, 198 residues long: Transcription factor elt-7 (198 aa).

Residues 1 to 18 (MLPETTTLQPLPSVTTIM) show a composition bias toward polar residues. The disordered stretch occupies residues 1 to 20 (MLPETTTLQPLPSVTTIMNE). A GATA-type zinc finger spans residues 143 to 167 (CSHCSTTTTTLWRKNDEGNLECNAC).

It is found in the nucleus. Its function is as follows. Transcriptional activator that binds to the consensus sequence 5'-[AT]GATA[AG]-3'. Required for gut-specific differentiation, specifically acting with the GATA region-binding transcription factor elt-2 to control normal gene expression and promote normal formation of the intestine. May have a protective role in response to infection by Gram-negative bacteria such as P.aeruginosa. The sequence is that of Transcription factor elt-7 from Caenorhabditis elegans.